The chain runs to 117 residues: B-box domain protein 30 (117 aa).

Residues 27–73 form a B box-type; atypical zinc finger; it reads KAPVSCELCGENATVYCEADAAFLCRKCDRWVHSANFLARRHLRRVI. 4 residues coordinate Zn(2+): C32, C35, C54, and H59. The PFVFL motif lies at 113–117; that stretch reads PFVFL.

In terms of assembly, interacts with CO (via B-box) and with TPL (via PFVFL motif). In terms of tissue distribution, highly expressed in shoot apical meristems and in vascular tissues of leaves. Also detected in petioles.

It localises to the nucleus. Its function is as follows. Developmental regulator acting by forming heterodimeric complexes, that sequester CO and CO-like (COL) proteins into non-functional complexes. Engages CO and the transcriptional repressor TPL in a tripartite complex. Involved in the CO-mediated long-day flowering-promotion pathway. The chain is B-box domain protein 30 from Arabidopsis thaliana (Mouse-ear cress).